A 243-amino-acid chain; its full sequence is Small ribosomal subunit protein eS4 (243 aa).

Positions 43 to 105 (IPLLYIVRDY…TGEHYRVLPN (63 aa)) constitute an S4 RNA-binding domain.

The protein belongs to the eukaryotic ribosomal protein eS4 family. As to quaternary structure, part of the 30S ribosomal subunit.

This is Small ribosomal subunit protein eS4 from Pyrococcus furiosus (strain ATCC 43587 / DSM 3638 / JCM 8422 / Vc1).